Here is a 311-residue protein sequence, read N- to C-terminus: Methionyl-tRNA formyltransferase (311 aa).

110-113 (SLLP) contributes to the (6S)-5,6,7,8-tetrahydrofolate binding site.

The protein belongs to the Fmt family.

The catalysed reaction is L-methionyl-tRNA(fMet) + (6R)-10-formyltetrahydrofolate = N-formyl-L-methionyl-tRNA(fMet) + (6S)-5,6,7,8-tetrahydrofolate + H(+). Its function is as follows. Attaches a formyl group to the free amino group of methionyl-tRNA(fMet). The formyl group appears to play a dual role in the initiator identity of N-formylmethionyl-tRNA by promoting its recognition by IF2 and preventing the misappropriation of this tRNA by the elongation apparatus. The chain is Methionyl-tRNA formyltransferase from Acidobacterium capsulatum (strain ATCC 51196 / DSM 11244 / BCRC 80197 / JCM 7670 / NBRC 15755 / NCIMB 13165 / 161).